A 517-amino-acid chain; its full sequence is Protein ERGIC-53 (517 aa).

The first 30 residues, 1–30 (MAVSRRRGPQAGAQSFFCALLLSFSQFVGS), serve as a signal peptide directing secretion. The Lumenal portion of the chain corresponds to 31–484 (DGMGGDAAAP…DLPAFPSCLS (454 aa)). The region spanning 52–275 (RRFEYKYSFK…DVLSFLTFQL (224 aa)) is the L-type lectin-like domain. Residues Ser-96 and Asp-129 each coordinate a carbohydrate. Ca(2+)-binding residues include Asp-160, Phe-162, Asp-163, Asn-164, Asp-165, Asn-169, and Asn-170. Asn-164 serves as a coordination point for a carbohydrate. Residue His-186 coordinates a carbohydrate. Residue Asp-189 coordinates Ca(2+). Cys-198 and Cys-238 are oxidised to a cystine. 259-261 (GGL) provides a ligand contact to a carbohydrate. Disordered stretches follow at residues 276-297 (TEPG…KEKY) and 377-396 (EISR…SQQE). Positions 278-297 (PGKEPPTPEKDISEKEKEKY) are enriched in basic and acidic residues. Position 433 is a phosphoserine (Ser-433). The chain crosses the membrane as a helical span at residues 485-505 (TVHFVIFIVVQTVLFIGYIMY). The Cytoplasmic segment spans residues 506 to 517 (RTQQEAAAKKFF). Positions 506-517 (RTQQEAAAKKFF) are mediates interaction with RAB3GAP1, RAB3GAP2 and UBXN6. An ER export motif motif is present at residues 516 to 517 (FF).

Exists both as a covalent disulfide-linked homohexamer, and a complex of three disulfide-linked dimers non-covalently kept together. Interacts with MCFD2. May interact with TMEM115. Interacts with RAB3GAP1 and RAB3GAP2. Interacts with UBXN6. Interacts with SERPINA1/alpha1-antitrypsin. Interacts with BET1.

The protein localises to the endoplasmic reticulum-Golgi intermediate compartment membrane. It is found in the golgi apparatus membrane. The protein resides in the endoplasmic reticulum membrane. In terms of biological role, mannose-specific lectin. May recognize sugar residues of glycoproteins, glycolipids, or glycosylphosphatidyl inositol anchors and may be involved in the sorting or recycling of proteins, lipids, or both. The LMAN1-MCFD2 complex forms a specific cargo receptor for the ER-to-Golgi transport of selected proteins. The sequence is that of Protein ERGIC-53 (Lman1) from Rattus norvegicus (Rat).